The sequence spans 289 residues: YLVNPAAYAALGAYMFLLILIGFPVNFLTLYVTIEHKKLRTPLNYILLNLAVANLFMVLGGFTTTMYTSMHGYFVLGRLGCNLEGFFATMGGEIALWSLVVLAIERWIVVCKPISNFRFTEDHAIMGLAFTWVMALSCAVPPLVGWSRYIPEGMQCSCGVDYYTRAEGFNNESFVIYMFIVHFLTPLIIISFCYGRLLCAVKEAAAAQQESETTQRAEREVSRMVVMMVISFLMCWLPYASVAWYIFCNQGSEFGPIFMTLPAFFAKSSAIYNPLIYICMNKQFRHCMI.

Residues 1–7 lie on the Extracellular side of the membrane; it reads YLVNPAA. A helical transmembrane segment spans residues 8-32; sequence YAALGAYMFLLILIGFPVNFLTLYV. Residues 33–44 are Cytoplasmic-facing; the sequence is TIEHKKLRTPLN. A helical transmembrane segment spans residues 45 to 67; that stretch reads YILLNLAVANLFMVLGGFTTTMY. Topologically, residues 68–81 are extracellular; sequence TSMHGYFVLGRLGC. A disulfide bond links Cys-81 and Cys-158. A helical transmembrane segment spans residues 82-104; that stretch reads NLEGFFATMGGEIALWSLVVLAI. The 'Ionic lock' involved in activated form stabilization signature appears at 105–107; the sequence is ERW. Residues 105-123 lie on the Cytoplasmic side of the membrane; that stretch reads ERWIVVCKPISNFRFTEDH. A helical membrane pass occupies residues 124-144; sequence AIMGLAFTWVMALSCAVPPLV. Residues 145–173 are Extracellular-facing; it reads GWSRYIPEGMQCSCGVDYYTRAEGFNNES. A glycan (N-linked (GlcNAc...) asparagine) is linked at Asn-171. A helical transmembrane segment spans residues 174 to 195; that stretch reads FVIYMFIVHFLTPLIIISFCYG. Topologically, residues 196–223 are cytoplasmic; sequence RLLCAVKEAAAAQQESETTQRAEREVSR. The helical transmembrane segment at 224 to 245 threads the bilayer; the sequence is MVVMMVISFLMCWLPYASVAWY. The Extracellular portion of the chain corresponds to 246 to 257; sequence IFCNQGSEFGPI. Residues 258–279 form a helical membrane-spanning segment; it reads FMTLPAFFAKSSAIYNPLIYIC. Lys-267 carries the N6-(retinylidene)lysine modification. The Cytoplasmic segment spans residues 280 to 289; sequence MNKQFRHCMI.

Belongs to the G-protein coupled receptor 1 family. Opsin subfamily. Post-translationally, phosphorylated on some or all of the serine and threonine residues present in the C-terminal region. In terms of processing, contains one covalently linked retinal chromophore.

The protein resides in the membrane. The protein localises to the cell projection. Its subcellular location is the cilium. It is found in the photoreceptor outer segment. Functionally, photoreceptor required for image-forming vision at low light intensity. While most salt water fish species use retinal as chromophore, most freshwater fish use 3-dehydroretinal, or a mixture of retinal and 3-dehydroretinal. Light-induced isomerization of 11-cis to all-trans retinal triggers a conformational change that activates signaling via G-proteins. Subsequent receptor phosphorylation mediates displacement of the bound G-protein alpha subunit by arrestin and terminates signaling. The chain is Rhodopsin (rho) from Cottocomephorus inermis (Longfin Baikal sculpin).